The following is a 306-amino-acid chain: Beta-lactamase 1 (306 aa).

The signal sequence occupies residues 1 to 43; it reads MKNKRMLKIGMCVGILGLSVTSLEAFTGGALQVEAKEKTGQVK. Residue Ser-89 is the Acyl-ester intermediate of the active site. The active-site Proton acceptor is the Glu-185. Position 251–253 (251–253) interacts with substrate; the sequence is KSG.

It belongs to the class-A beta-lactamase family.

The enzyme catalyses a beta-lactam + H2O = a substituted beta-amino acid. Functionally, this protein is a beta-lactamase with a substrate specificity for penicillins. The protein is Beta-lactamase 1 (blaCI) of Bacillus mycoides.